Consider the following 312-residue polypeptide: MEIIFYHPTFNAAWWVNALEKALPHARVREWKVGDNNPADYALVWQPPVEMLAGRRLKAVFVLGAGVDAILSKLNAHPEMLDASIPLFRLEDTGMGLQMQEYAVSQVLHWFRRFDDYQALKNQALWKPLPEYTREEFSVGIMGAGVLGAKVAESLQAWGFPLRCWSRSRKSWPGVESYVGREELRAFLNQTRVLINLLPNTTQTVGIINSELLDQLPDGAYVLNLARGVHVQEADLLAALDSGKLKGAMLDVFSQEPLPQESPLWRHPRVAMTPHIAAVTRPAEAIDYISRTITQLEKGEPVTGQVDRARGY.

The active site involves arginine 227. Histidine 275 functions as the Proton donor in the catalytic mechanism.

The protein belongs to the D-isomer specific 2-hydroxyacid dehydrogenase family. GhrA subfamily.

The protein resides in the cytoplasm. The enzyme catalyses glycolate + NADP(+) = glyoxylate + NADPH + H(+). The catalysed reaction is (R)-glycerate + NAD(+) = 3-hydroxypyruvate + NADH + H(+). It carries out the reaction (R)-glycerate + NADP(+) = 3-hydroxypyruvate + NADPH + H(+). In terms of biological role, catalyzes the NADPH-dependent reduction of glyoxylate and hydroxypyruvate into glycolate and glycerate, respectively. This chain is Glyoxylate/hydroxypyruvate reductase A, found in Salmonella choleraesuis (strain SC-B67).